A 518-amino-acid polypeptide reads, in one-letter code: Receptor-interacting serine/threonine-protein kinase 3 (518 aa).

Ser-2 carries the post-translational modification Phosphoserine. Positions Leu-21 to Phe-287 constitute a Protein kinase domain. ATP is bound at residue Val-27–Val-35. Lys-42 is covalently cross-linked (Glycyl lysine isopeptide (Lys-Gly) (interchain with G-Cter in ubiquitin)). Residue Lys-50 coordinates ATP. The Proton acceptor role is filled by Asp-142. Position 164 is a phosphoserine (Ser-164). Thr-182 bears the Phosphothreonine mark. A phosphoserine; by autocatalysis mark is found at Ser-199 and Ser-227. Thr-252 carries the phosphothreonine modification. Ser-299 bears the Phosphoserine mark. Phosphothreonine is present on Thr-333. Glycyl lysine isopeptide (Lys-Gly) (interchain with G-Cter in ubiquitin) cross-links involve residues Lys-351 and Lys-363. A disordered region spans residues Glu-355–Pro-443. Residues Thr-384 to Met-408 are compositionally biased toward polar residues. Ser-389 is subject to Phosphoserine. Residue Thr-401 is modified to Phosphothreonine. Residues Val-450–Leu-466 carry the RIP homotypic interaction motif (RHIM) motif. A disordered region spans residues Thr-476–Lys-518. Residue Lys-518 forms a Glycyl lysine isopeptide (Lys-Gly) (interchain with G-Cter in ubiquitin) linkage.

It belongs to the protein kinase superfamily. TKL Ser/Thr protein kinase family. Interacts (via RIP homotypic interaction motif) with RIPK1 (via RIP homotypic interaction motif); this interaction induces RIPK1 phosphorylation and formation of a RIPK1-RIPK3 necrosis-inducing complex. Interacts with MLKL; the interaction is direct and triggers necroptosis. Interacts with ZBP1 (via RIP homotypic interaction motif); interaction with ZBP1 activates RIPK3, triggering necroptosis. Upon TNF-induced necrosis, the RIPK1-RIPK3 dimer further interacts with PGAM5 and MLKL; the formation of this complex leads to PGAM5 phosphorylation and increase in PGAM5 phosphatase activity. Binds TRAF2 and is recruited to the TNFR-1 signaling complex. Interacts with PYGL, GLUL and GLUD1; these interactions result in activation of these metabolic enzymes. Interacts with BIRC2/c-IAP1, BIRC3/c-IAP2 and XIAP/BIRC4. Interacts with ARHGEF2. Interacts with PELI1 (via atypical FHA domain); the phosphorylated form at Thr-182 binds preferentially to PELI1. Interacts with BUB1B, TRAF2 and STUB1. Interacts with CASP6. Component of the AIM2 PANoptosome complex, a multiprotein complex that drives inflammatory cell death (PANoptosis). In terms of assembly, (Microbial infection) Interacts (via RIP homotypic interaction motif/RHIM) with herpes simplex virus 1/HHV-1 protein RIR1/ICP6 (via RHIM); this interaction may induce heteromeric amyloid assemblies and prevent necroptosis activation. As to quaternary structure, (Microbial infection) Interacts (via RIP homotypic interaction motif/RHIM) with herpes simplex virus 2/HHV-2 protein RIR1/ICP10 (via RHIM); this interaction prevents necroptosis activation. Post-translationally, (Microbial infection) Proteolytically cleaved by S.flexneri OspD3 within the RIP homotypic interaction motif (RHIM), leading to its degradation and inhibition of necroptosis. RIPK1 and RIPK3 undergo reciprocal auto- and trans-phosphorylation. Autophosphorylated following interaction with ZBP1. Phosphorylation of Ser-199 plays a role in the necroptotic function of RIPK3. Autophosphorylates at Ser-227 following activation by ZBP1: phosphorylation at these sites is a hallmark of necroptosis and is required for binding MLKL. Phosphorylation at Thr-182 is important for its kinase activity, interaction with PELI1 and PELI1-mediated 'Lys-48'-linked polyubiquitination and for its ability to mediate TNF-induced necroptosis. In terms of processing, polyubiquitinated with 'Lys-48' and 'Lys-63'-linked chains by BIRC2/c-IAP1 and BIRC3/c-IAP2, leading to activation of NF-kappa-B. Polyubiquitinated with 'Lys-48'-linked chains by PELI1 leading to its subsequent proteasome-dependent degradation. Ubiquitinated by STUB1 leading to its subsequent proteasome-dependent degradation. Deubiquitinated by USP22. In terms of tissue distribution, highly expressed in the pancreas. Detected at lower levels in heart, placenta, lung and kidney. As to expression, expression is significantly increased in colon and lung cancers.

It is found in the cytoplasm. The protein localises to the cytosol. The protein resides in the nucleus. It carries out the reaction L-seryl-[protein] + ATP = O-phospho-L-seryl-[protein] + ADP + H(+). It catalyses the reaction L-threonyl-[protein] + ATP = O-phospho-L-threonyl-[protein] + ADP + H(+). With respect to regulation, activity is stimulated by ZBP1, which senses double-stranded Z-RNA structures. RIPK3-dependent necroptosis is inhibited by RIPK1: RIPK1 prevents the ZBP1-induced activation of RIPK3 via FADD-mediated recruitment of CASP8, which cleaves RIPK1 and limits TNF-induced necroptosis. Functionally, serine/threonine-protein kinase that activates necroptosis and apoptosis, two parallel forms of cell death. Necroptosis, a programmed cell death process in response to death-inducing TNF-alpha family members, is triggered by RIPK3 following activation by ZBP1. Activated RIPK3 forms a necrosis-inducing complex and mediates phosphorylation of MLKL, promoting MLKL localization to the plasma membrane and execution of programmed necrosis characterized by calcium influx and plasma membrane damage. In addition to TNF-induced necroptosis, necroptosis can also take place in the nucleus in response to orthomyxoviruses infection: following ZBP1 activation, which senses double-stranded Z-RNA structures, nuclear RIPK3 catalyzes phosphorylation and activation of MLKL, promoting disruption of the nuclear envelope and leakage of cellular DNA into the cytosol. Also regulates apoptosis: apoptosis depends on RIPK1, FADD and CASP8, and is independent of MLKL and RIPK3 kinase activity. Phosphorylates RIPK1: RIPK1 and RIPK3 undergo reciprocal auto- and trans-phosphorylation. In some cell types, also able to restrict viral replication by promoting cell death-independent responses. In response to Zika virus infection in neurons, promotes a cell death-independent pathway that restricts viral replication: together with ZBP1, promotes a death-independent transcriptional program that modifies the cellular metabolism via up-regulation expression of the enzyme ACOD1/IRG1 and production of the metabolite itaconate. Itaconate inhibits the activity of succinate dehydrogenase, generating a metabolic state in neurons that suppresses replication of viral genomes. RIPK3 binds to and enhances the activity of three metabolic enzymes: GLUL, GLUD1, and PYGL. These metabolic enzymes may eventually stimulate the tricarboxylic acid cycle and oxidative phosphorylation, which could result in enhanced ROS production. (Microbial infection) In case of herpes simplex virus 1/HHV-1 infection, forms heteromeric amyloid structures with HHV-1 protein RIR1/ICP6 which may inhibit RIPK3-mediated necroptosis, thereby preventing host cell death pathway and allowing viral evasion. This chain is Receptor-interacting serine/threonine-protein kinase 3, found in Homo sapiens (Human).